The chain runs to 187 residues: Probable chorismate pyruvate-lyase (187 aa).

Residues Arg76, Leu114, and Glu173 each coordinate substrate.

The protein belongs to the UbiC family.

The protein resides in the cytoplasm. The enzyme catalyses chorismate = 4-hydroxybenzoate + pyruvate. Its pathway is cofactor biosynthesis; ubiquinone biosynthesis. Functionally, removes the pyruvyl group from chorismate, with concomitant aromatization of the ring, to provide 4-hydroxybenzoate (4HB) for the ubiquinone pathway. The protein is Probable chorismate pyruvate-lyase of Shewanella amazonensis (strain ATCC BAA-1098 / SB2B).